Reading from the N-terminus, the 381-residue chain is Creatine kinase B-type (381 aa).

Phosphoserine is present on Ser-4. Residues 11-98 (KLRFPAEDEF…FDPIIEDRHG (88 aa)) enclose the Phosphagen kinase N-terminal domain. Thr-35 carries the post-translational modification Phosphothreonine. A Glycyl lysine isopeptide (Lys-Gly) (interchain with G-Cter in ubiquitin) cross-link involves residue Lys-45. Val-72 contributes to the creatine binding site. A compositionally biased stretch (basic and acidic residues) spans 96–110 (RHGGYKPSDEHKTDL). Residues 96–123 (RHGGYKPSDEHKTDLNPDNLQGGDDLDP) form a disordered region. Residues Lys-101 and Lys-107 each participate in a glycyl lysine isopeptide (Lys-Gly) (interchain with G-Cter in ubiquitin) cross-link. A Phosphotyrosine modification is found at Tyr-125. Positions 125-367 (YVLSSRVRTG…KLLIEMEQRL (243 aa)) constitute a Phosphagen kinase C-terminal domain. ATP-binding positions include 128-132 (SSRVR), Arg-130, Arg-132, and His-191. The segment at 130-138 (RVRTGRSIR) is internal MTS-like signal. Phosphoserine is present on Ser-199. Glu-232 serves as a coordination point for creatine. Arg-236 is a binding site for ATP. 3'-nitrotyrosine is present on Tyr-269. Creatine is bound at residue Ser-285. ATP is bound by residues Arg-292, Arg-320, 320 to 325 (RGTGGV), and Asp-335. Position 322 is a phosphothreonine (Thr-322). Lys-381 participates in a covalent cross-link: Glycyl lysine isopeptide (Lys-Gly) (interchain with G-Cter in ubiquitin).

This sequence belongs to the ATP:guanido phosphotransferase family. In terms of assembly, dimer of identical or non-identical chains, which can be either B (brain type) or M (muscle type). With MM being the major form in skeletal muscle and myocardium, MB existing in myocardium, and BB existing in many tissues, especially brain. Interacts with SLC12A6 (via C-terminus); the interaction may be required for SLC12A6 potassium-chloride cotransport activity. Ubiquitinated by the ECS(ASB9) complex, leading to its degradation by the proteasome.

It localises to the cytoplasm. The protein localises to the cytosol. Its subcellular location is the mitochondrion. It is found in the cell membrane. The catalysed reaction is creatine + ATP = N-phosphocreatine + ADP + H(+). Functionally, reversibly catalyzes the transfer of phosphate between ATP and various phosphogens (e.g. creatine phosphate). Creatine kinase isoenzymes play a central role in energy transduction in tissues with large, fluctuating energy demands, such as skeletal muscle, heart, brain and spermatozoa. Acts as a key regulator of adaptive thermogenesis as part of the futile creatine cycle: localizes to the mitochondria of thermogenic fat cells and acts by mediating phosphorylation of creatine to initiate a futile cycle of creatine phosphorylation and dephosphorylation. During the futile creatine cycle, creatine and N-phosphocreatine are in a futile cycle, which dissipates the high energy charge of N-phosphocreatine as heat without performing any mechanical or chemical work. This is Creatine kinase B-type (CKB) from Canis lupus familiaris (Dog).